The sequence spans 81 residues: MNQSEILEKVKAIVADQLSVDPEKVVPEASFAEDLNADSLDSVELIMALEEEFGVEIPDEEAEKLKTVQDVLDFINNKVAA.

Residues 4–79 form the Carrier domain; sequence SEILEKVKAI…DVLDFINNKV (76 aa). At S39 the chain carries O-(pantetheine 4'-phosphoryl)serine.

This sequence belongs to the acyl carrier protein (ACP) family. 4'-phosphopantetheine is transferred from CoA to a specific serine of apo-ACP by AcpS. This modification is essential for activity because fatty acids are bound in thioester linkage to the sulfhydryl of the prosthetic group.

It localises to the cytoplasm. The protein operates within lipid metabolism; fatty acid biosynthesis. Its function is as follows. Carrier of the growing fatty acid chain in fatty acid biosynthesis. This Thermosynechococcus vestitus (strain NIES-2133 / IAM M-273 / BP-1) protein is Acyl carrier protein.